Consider the following 400-residue polypeptide: Large envelope protein (400 aa).

An N-acetylmethionine modification is found at M1. A lipid anchor (N-myristoyl glycine; by host) is attached at G2. The pre-S1 stretch occupies residues 2-119; sequence GAPLSTARRG…PPLRDTHPQA (118 aa). The tract at residues 2-174 is pre-S; sequence GAPLSTARRG…FSKTGDPAMN (173 aa). Topologically, residues 2–181 are virion surface; in external conformation; sequence GAPLSTARRG…AMNMENITSG (180 aa). At 2–253 the chain is on the intravirion; in internal conformation side; that stretch reads GAPLSTARRG…PGYRWMCLRR (252 aa). The N-linked (GlcNAc...) asparagine glycan is linked to P4. The interval 70-115 is disordered; sequence PHGGLLGWSPQAQGILTTSPPDPPPASTNRRSGRKPTPVSPPLRDT. Residues 79–88 show a composition bias toward polar residues; it reads PQAQGILTTS. The interval 120 to 174 is pre-S2; that stretch reads MQWNSTQFHQALLDPRVRGLYFPAGGSSSETQNPVPTIASLTSSIFSKTGDPAMN. Residues 182–202 traverse the membrane as a helical segment; that stretch reads LLGPLLVLQAVCFLLTKILTI. Residues 203 to 253 are Intravirion; in external conformation-facing; it reads PQSLDSWWTSLNFLGVPPGCPGQNSQSPISNHLPTSCPPTCPGYRWMCLRR. The helical transmembrane segment at 254-274 threads the bilayer; that stretch reads FIIFLFILLLCLIFLLVLLDY. Residues 275–348 lie on the Virion surface side of the membrane; that stretch reads QGMLPVCPLL…WASARFSWLS (74 aa). A glycan (N-linked (GlcNAc...) asparagine; by host) is linked at N320. A helical membrane pass occupies residues 349–369; it reads LLVQFVQWCVGLSPTVWLLVI. Residues 370-375 are Intravirion-facing; that stretch reads WMIWYW. The chain crosses the membrane as a helical span at residues 376–398; that stretch reads GPNLCSILSPFIPLLPIFCYLWA. The Virion surface segment spans residues 399 to 400; sequence SI.

This sequence belongs to the orthohepadnavirus major surface antigen family. In terms of assembly, in its internal form (Li-HBsAg), interacts with the capsid protein and with the isoform S. Interacts with host chaperone CANX. As to quaternary structure, associates with host chaperone CANX through its pre-S2 N glycan; this association may be essential for isoform M proper secretion. Interacts with isoform L. Interacts with the antigens of satellite virus HDV (HDVAgs); this interaction is required for encapsidation of HDV genomic RNA. Isoform M is N-terminally acetylated by host at a ratio of 90%, and N-glycosylated by host at the pre-S2 region. In terms of processing, myristoylated.

It localises to the virion membrane. The large envelope protein exists in two topological conformations, one which is termed 'external' or Le-HBsAg and the other 'internal' or Li-HBsAg. In its external conformation the protein attaches the virus to cell receptors and thereby initiating infection. This interaction determines the species specificity and liver tropism. This attachment induces virion internalization predominantly through caveolin-mediated endocytosis. The large envelope protein also assures fusion between virion membrane and endosomal membrane. In its internal conformation the protein plays a role in virion morphogenesis and mediates the contact with the nucleocapsid like a matrix protein. Its function is as follows. The middle envelope protein plays an important role in the budding of the virion. It is involved in the induction of budding in a nucleocapsid independent way. In this process the majority of envelope proteins bud to form subviral lipoprotein particles of 22 nm of diameter that do not contain a nucleocapsid. The chain is Large envelope protein from Homo sapiens (Human).